We begin with the raw amino-acid sequence, 418 residues long: Serine--tRNA ligase (418 aa).

231–233 lines the L-serine pocket; the sequence is TAE. 262 to 264 is an ATP binding site; it reads RSE. Glu-285 lines the L-serine pocket. 349-352 contacts ATP; the sequence is EISS. Ser-385 provides a ligand contact to L-serine.

This sequence belongs to the class-II aminoacyl-tRNA synthetase family. Type-1 seryl-tRNA synthetase subfamily. As to quaternary structure, homodimer. The tRNA molecule binds across the dimer.

It localises to the cytoplasm. It catalyses the reaction tRNA(Ser) + L-serine + ATP = L-seryl-tRNA(Ser) + AMP + diphosphate + H(+). The enzyme catalyses tRNA(Sec) + L-serine + ATP = L-seryl-tRNA(Sec) + AMP + diphosphate + H(+). It participates in aminoacyl-tRNA biosynthesis; selenocysteinyl-tRNA(Sec) biosynthesis; L-seryl-tRNA(Sec) from L-serine and tRNA(Sec): step 1/1. Catalyzes the attachment of serine to tRNA(Ser). Is also able to aminoacylate tRNA(Sec) with serine, to form the misacylated tRNA L-seryl-tRNA(Sec), which will be further converted into selenocysteinyl-tRNA(Sec). The chain is Serine--tRNA ligase from Ureaplasma parvum serovar 3 (strain ATCC 27815 / 27 / NCTC 11736).